The chain runs to 396 residues: Obg-like ATPase 1 (396 aa).

An OBG-type G domain is found at 23–283 (LKIGIVGLPN…LSAEERQKYL (261 aa)). 32–37 (NVGKST) lines the ATP pocket. Mg(2+) is bound by residues Ser-36 and Thr-56. Leu-231 is a binding site for ATP. A Nuclear export signal motif is present at residues 267-274 (LELKLQEL). Lys-294 is subject to N6-acetyllysine. Residues 304 to 387 (QLEYFFTAGP…EDGDIIFFKF (84 aa)) form the TGS domain.

It belongs to the TRAFAC class OBG-HflX-like GTPase superfamily. OBG GTPase family. YchF/OLA1 subfamily. As to quaternary structure, monomer. Requires Mg(2+) as cofactor. In terms of tissue distribution, expressed in all tissues tested but its expression is more abundant in testis, liver, lung, and brain. Overexpressed in several malignancies, including cancers of the colon, rectum, ovary, lung, stomach, and uterus.

Its subcellular location is the cytoplasm. The protein localises to the nucleus. It localises to the nucleolus. Hydrolyzes ATP, and can also hydrolyze GTP with lower efficiency. Has lower affinity for GTP. The protein is Obg-like ATPase 1 of Homo sapiens (Human).